A 337-amino-acid polypeptide reads, in one-letter code: ATP-dependent 6-phosphofructokinase (337 aa).

G11 provides a ligand contact to ATP. 21–25 lines the ADP pocket; that stretch reads RAVVR. ATP contacts are provided by residues 72–73 and 102–105; these read RY and GDGS. D103 is a binding site for Mg(2+). 125–127 contributes to the substrate binding site; sequence TID. D127 acts as the Proton acceptor in catalysis. R154 provides a ligand contact to ADP. Substrate is bound by residues R162 and 169–171; that span reads MGR. Residues 185-187, K212, and 214-216 contribute to the ADP site; these read GAD and KNH. Residues E223, R245, and 251 to 254 contribute to the substrate site; that span reads HILR.

It belongs to the phosphofructokinase type A (PFKA) family. ATP-dependent PFK group I subfamily. Prokaryotic clade 'B1' sub-subfamily. As to quaternary structure, homotetramer. Requires Mg(2+) as cofactor.

The protein localises to the cytoplasm. The enzyme catalyses beta-D-fructose 6-phosphate + ATP = beta-D-fructose 1,6-bisphosphate + ADP + H(+). The protein operates within carbohydrate degradation; glycolysis; D-glyceraldehyde 3-phosphate and glycerone phosphate from D-glucose: step 3/4. Allosterically activated by ADP and other diphosphonucleosides, and allosterically inhibited by phosphoenolpyruvate. Functionally, catalyzes the phosphorylation of D-fructose 6-phosphate to fructose 1,6-bisphosphate by ATP, the first committing step of glycolysis. In Streptococcus pyogenes serotype M1, this protein is ATP-dependent 6-phosphofructokinase.